We begin with the raw amino-acid sequence, 182 residues long: UPF0397 protein BA_2640/GBAA_2640/BAS2460 (182 aa).

The next 5 membrane-spanning stretches (helical) occupy residues 9–29 (VVAI…GFSI), 40–60 (AILT…IGLI), 71–91 (WSIW…MGFI), 114–134 (ITGL…DIIV), and 142–162 (IVIQ…VLGL).

This sequence belongs to the UPF0397 family.

The protein resides in the cell membrane. This is UPF0397 protein BA_2640/GBAA_2640/BAS2460 from Bacillus anthracis.